A 574-amino-acid chain; its full sequence is K(+)/H(+) antiporter NhaP2 (574 aa).

13 helical membrane passes run 6 to 26 (INSF…LSPM), 30 to 50 (LGIP…EDGL), 58 to 78 (YSTA…DGGM), 87 to 107 (VALW…TSIT), 109 to 129 (LMAA…GAIV), 173 to 193 (IAIL…VSFI), 196 to 216 (FGLG…LVNL), 219 to 239 (LAEG…YAVS), 242 to 262 (LGGS…NKPT), 271 to 291 (VLDG…GLLL), 299 to 319 (ILLP…PLAV), 335 to 355 (WFIS…VFPM), and 359 to 379 (LPGA…SLLI). One can recognise an RCK C-terminal domain in the interval 405 to 486 (SGVEIYPSSE…LDALSHLFSQ (82 aa)).

It belongs to the monovalent cation:proton antiporter 1 (CPA1) transporter (TC 2.A.36) family. NhaP2 subfamily.

The protein localises to the cell inner membrane. It carries out the reaction K(+)(in) + H(+)(out) = K(+)(out) + H(+)(in). In terms of biological role, k(+)/H(+) antiporter that extrudes potassium in exchange for external protons and maintains the internal concentration of potassium under toxic levels. This Shewanella sp. (strain W3-18-1) protein is K(+)/H(+) antiporter NhaP2.